A 493-amino-acid polypeptide reads, in one-letter code: Galactose-1-phosphate uridylyltransferase (493 aa).

This sequence belongs to the galactose-1-phosphate uridylyltransferase type 2 family.

Its subcellular location is the cytoplasm. The catalysed reaction is alpha-D-galactose 1-phosphate + UDP-alpha-D-glucose = alpha-D-glucose 1-phosphate + UDP-alpha-D-galactose. Its pathway is carbohydrate metabolism; galactose metabolism. The protein is Galactose-1-phosphate uridylyltransferase (galT) of Streptococcus thermophilus.